We begin with the raw amino-acid sequence, 302 residues long: Sulfate adenylyltransferase subunit 2 (302 aa).

This sequence belongs to the PAPS reductase family. CysD subfamily. Heterodimer composed of CysD, the smaller subunit, and CysN.

It carries out the reaction sulfate + ATP + H(+) = adenosine 5'-phosphosulfate + diphosphate. It participates in sulfur metabolism; hydrogen sulfide biosynthesis; sulfite from sulfate: step 1/3. With CysN forms the ATP sulfurylase (ATPS) that catalyzes the adenylation of sulfate producing adenosine 5'-phosphosulfate (APS) and diphosphate, the first enzymatic step in sulfur assimilation pathway. APS synthesis involves the formation of a high-energy phosphoric-sulfuric acid anhydride bond driven by GTP hydrolysis by CysN coupled to ATP hydrolysis by CysD. This Methylococcus capsulatus (strain ATCC 33009 / NCIMB 11132 / Bath) protein is Sulfate adenylyltransferase subunit 2.